A 181-amino-acid polypeptide reads, in one-letter code: Oligoribonuclease (181 aa).

In terms of domain architecture, Exonuclease spans 8–171; that stretch reads LIWIDMEMTG…ADIYDSIEEL (164 aa). Residue Tyr-129 is part of the active site.

Belongs to the oligoribonuclease family.

The protein localises to the cytoplasm. In terms of biological role, 3'-to-5' exoribonuclease specific for small oligoribonucleotides. The chain is Oligoribonuclease from Nitrosomonas europaea (strain ATCC 19718 / CIP 103999 / KCTC 2705 / NBRC 14298).